The primary structure comprises 476 residues: Transcription factor EB (476 aa).

2 disordered regions span residues 1 to 66 (MASR…PPVP) and 107 to 142 (HISP…APNS). Residues 1 to 167 (MASRIGLRMQ…DDVIDNIMRL (167 aa)) form an interaction with ACSS2 region. Low complexity predominate over residues 26–44 (QQQAVMHYMQQQQQQQQQQ). Phosphoserine occurs at positions 109, 114, 122, and 138. Over residues 132 to 142 (SSSAGNSAPNS) the composition is skewed to low complexity. The Nuclear export signal signature appears at 136–153 (GNSAPNSPMAMLHIGSNP). Ser-142 carries the phosphoserine; by MTOR modification. The strong transcription activation domain stretch occupies residues 156 to 165 (ELDDVIDNIM). Thr-183 carries the phosphothreonine modification. Residue Ser-211 is modified to Phosphoserine; by MTOR. The residue at position 212 (Cys-212) is an S-(2,3-dicarboxypropyl)cysteine. In terms of domain architecture, bHLH spans 235 to 288 (QKKDNHNLIERRRRFNINDRIKELGMLIPKANDLDVRWNKGTILKASVDYIRRM). A Nuclear localization signal motif is present at residues 245–248 (RRRR). Residues 298 to 319 (LENHSRRLEMTNKQLWLRIQEL) form a leucine-zipper region. Residue Ser-332 is modified to Phosphoserine. Residues 349–430 (ELPSEEGPGE…HGSPFPSLSK (82 aa)) are disordered. Over residues 369–390 (PEPLPALPPQAPLPLPTQPPSP) the composition is skewed to pro residues. A phosphoserine mark is found at Ser-423, Ser-441, Ser-466, Ser-467, and Ser-469. Residues 447–469 (SDPLLSTMSPEASKASSRRSSFS) are compositionally biased toward low complexity. The tract at residues 447–476 (SDPLLSTMSPEASKASSRRSSFSMEEGDVL) is disordered.

This sequence belongs to the MiT/TFE family. In terms of assembly, homodimer and heterodimer; with TFE3 or MITF. Interacts (when phosphorylated by MTOR) with YWHAZ; promoting retention in the cytosol. Interacts with IRGM; promoting association between TFEB and PPP3CB and dephosphorylation. Interacts with small GTPases Rag (RagA/RRAGA, RagB/RRAGB, RagC/RRAGC and/or RagD/RRAGD); promoting its recruitment to lysosomal membrane in the presence of nutrients. Interacts with ACSS2. Post-translationally, phosphorylation at Ser-211 by MTOR via non-canonical mTORC1 pathway regulates its subcellular location and activity. When nutrients are present, phosphorylation by MTOR promotes association with 14-3-3/YWHA adapters and retention in the cytosol. Inhibition of mTORC1, starvation and lysosomal disruption, promotes dephosphorylation by calcineurin PPP3CB and translocation to the nucleus. Dephosphorylated by calcineurin PPP3CB in response to lysosomal Ca(2+) release. IRGM promotes dephosphorylation by calcineurin PPP3CB, resulting in TFEB nuclear translocation and stimulation of lysosomal biogenesis. Dephosphorylated by phosphatase PPP3CA following Coxsackievirus B3 infection, leading to nuclear translocation. Exported from the nucleus in a mTORC1-dependent manner in response to nutrient availability. Alkylated via a non-enzymatic covalent modification. Itaconate, an anti-inflammatory metabolite generated in response to lipopolysaccharide, alkylates Cys-212, preventing association with 14-3-3/YWHA adapters, thereby promoting nuclear translocation and activity. In terms of processing, sumoylated; does not affect dimerization with MITF. Post-translationally, (Microbial infection) Cleavage by Coxsackievirus B3 protease 3C after site Gln-60. This non-phosphorylated cleavage product retains its ability to interact with TFEB, TFE3 or MITF and presents impaired transcriptional activity, resulting in disruption of lysosomal functions and increased viral infection.

It localises to the nucleus. It is found in the cytoplasm. The protein resides in the cytosol. Its subcellular location is the lysosome membrane. With respect to regulation, inhibited by eltrombopag drug, which binds to the bHLH domain and disrupts DNA-binding. Functionally, transcription factor that acts as a master regulator of lysosomal biogenesis, autophagy, lysosomal exocytosis, lipid catabolism, energy metabolism and immune response. Specifically recognizes and binds E-box sequences (5'-CANNTG-3'); efficient DNA-binding requires dimerization with itself or with another MiT/TFE family member such as TFE3 or MITF. Involved in the cellular response to amino acid availability by acting downstream of MTOR: in the presence of nutrients, TFEB phosphorylation by MTOR promotes its cytosolic retention and subsequent inactivation. Upon starvation or lysosomal stress, inhibition of MTOR induces TFEB dephosphorylation, resulting in nuclear localization and transcription factor activity. Specifically recognizes and binds the CLEAR-box sequence (5'-GTCACGTGAC-3') present in the regulatory region of many lysosomal genes, leading to activate their expression, thereby playing a central role in expression of lysosomal genes. Regulates lysosomal positioning in response to nutrient deprivation by promoting the expression of PIP4P1. Acts as a positive regulator of autophagy by promoting expression of genes involved in autophagy. In association with TFE3, activates the expression of CD40L in T-cells, thereby playing a role in T-cell-dependent antibody responses in activated CD4(+) T-cells and thymus-dependent humoral immunity. Specifically recognizes the gamma-E3 box, a subset of E-boxes, present in the heavy-chain immunoglobulin enhancer. Plays a role in the signal transduction processes required for normal vascularization of the placenta. Involved in the immune response to infection by the bacteria S.aureus, S.typhimurium or S.enterica: infection promotes itaconate production, leading to alkylation, resulting in nuclear localization and transcription factor activity. Itaconate-mediated alkylation activates TFEB-dependent lysosomal biogenesis, facilitating the bacteria clearance during the antibacterial innate immune response. In association with ACSS2, promotes the expression of genes involved in lysosome biogenesis and both autophagy upon glucose deprivation. This is Transcription factor EB from Homo sapiens (Human).